We begin with the raw amino-acid sequence, 514 residues long: Cytidine and dCMP deaminase domain-containing protein 1 (514 aa).

Composition is skewed to polar residues over residues 1–11 (MKEAGQMQNLE) and 18–27 (SVSTQTGSMT). 2 disordered regions span residues 1 to 27 (MKEAGQMQNLESARAGRSVSTQTGSMT) and 55 to 83 (RQKSQKNEEGKHGPLGDNEERTRVSTDKR). Residues 59–83 (QKNEEGKHGPLGDNEERTRVSTDKR) are compositionally biased toward basic and acidic residues. The CMP/dCMP-type deaminase 1 domain occupies 70–168 (GDNEERTRVS…SLLTEASSSE (99 aa)). Zn(2+) contacts are provided by histidine 109, cysteine 134, and cysteine 137. The short motif at 271–283 (NLRQNMKDLILLL) is the Nuclear export signal element. One can recognise a CMP/dCMP-type deaminase 2 domain in the interval 317–482 (EIARHCMVQA…LNPSGAYGLE (166 aa)). Residue histidine 398 coordinates Zn(2+). The Proton donor role is filled by glutamate 400. The Zn(2+) site is built by cysteine 426 and cysteine 429. The interval 480-514 (GLEQNEPERRENGVLRPVPQKEEQHQDKKLRLGIH) is disordered. A compositionally biased stretch (basic and acidic residues) spans 485 to 514 (EPERRENGVLRPVPQKEEQHQDKKLRLGIH). A Bipartite nuclear localization signal motif is present at residues 488 to 510 (RRENGVLRPVPQKEEQHQDKKLR).

Belongs to the cytidine and deoxycytidylate deaminase family. The cofactor is Zn(2+). In terms of tissue distribution, widely expressed. Expressed at high levels in the testis.

The protein localises to the cytoplasm. It is found in the nucleus. It carries out the reaction 2'-deoxycytidine + H2O + H(+) = 2'-deoxyuridine + NH4(+). The enzyme catalyses cytidine + H2O + H(+) = uridine + NH4(+). Functionally, catalyzes the deamination of cytidine and deoxycytidine into uridine and deoxyuridine, respectively. May play an important role in testicular development and spermatogenesis. In Homo sapiens (Human), this protein is Cytidine and dCMP deaminase domain-containing protein 1 (CDADC1).